The primary structure comprises 78 residues: Large ribosomal subunit protein bL28 (78 aa).

The interval 1 to 22 (MSKVCQVTGKRPTTGNNVSHAN) is disordered. Polar residues predominate over residues 11–22 (RPTTGNNVSHAN).

This sequence belongs to the bacterial ribosomal protein bL28 family.

This Alkalilimnicola ehrlichii (strain ATCC BAA-1101 / DSM 17681 / MLHE-1) protein is Large ribosomal subunit protein bL28.